A 301-amino-acid chain; its full sequence is tRNA dimethylallyltransferase (301 aa).

Residue 12–19 (GPTAVGKT) participates in ATP binding. 14–19 (TAVGKT) serves as a coordination point for substrate. Positions 37–40 (DSQQ) are interaction with substrate tRNA.

Belongs to the IPP transferase family. In terms of assembly, monomer. Mg(2+) serves as cofactor.

The enzyme catalyses adenosine(37) in tRNA + dimethylallyl diphosphate = N(6)-dimethylallyladenosine(37) in tRNA + diphosphate. Its function is as follows. Catalyzes the transfer of a dimethylallyl group onto the adenine at position 37 in tRNAs that read codons beginning with uridine, leading to the formation of N6-(dimethylallyl)adenosine (i(6)A). This is tRNA dimethylallyltransferase from Streptococcus uberis (strain ATCC BAA-854 / 0140J).